The chain runs to 202 residues: Superoxide dismutase [Mn/Fe] (202 aa).

Fe(3+) is bound by residues H27, H81, D163, and H167. Residues H27, H81, D163, and H167 each contribute to the Mn(2+) site.

This sequence belongs to the iron/manganese superoxide dismutase family. The cofactor is Mn(2+). It depends on Fe(3+) as a cofactor.

The catalysed reaction is 2 superoxide + 2 H(+) = H2O2 + O2. Destroys superoxide anion radicals which are normally produced within the cells and which are toxic to biological systems. Catalyzes the dismutation of superoxide anion radicals into O2 and H2O2 by successive reduction and oxidation of the transition metal ion at the active site. The sequence is that of Superoxide dismutase [Mn/Fe] (sodA) from Streptococcus agalactiae serotype V (strain ATCC BAA-611 / 2603 V/R).